The primary structure comprises 283 residues: ATP phosphoribosyltransferase (283 aa).

The protein belongs to the ATP phosphoribosyltransferase family. Long subfamily. Mg(2+) serves as cofactor.

It localises to the cytoplasm. It catalyses the reaction 1-(5-phospho-beta-D-ribosyl)-ATP + diphosphate = 5-phospho-alpha-D-ribose 1-diphosphate + ATP. The protein operates within amino-acid biosynthesis; L-histidine biosynthesis; L-histidine from 5-phospho-alpha-D-ribose 1-diphosphate: step 1/9. Feedback inhibited by histidine. In terms of biological role, catalyzes the condensation of ATP and 5-phosphoribose 1-diphosphate to form N'-(5'-phosphoribosyl)-ATP (PR-ATP). Has a crucial role in the pathway because the rate of histidine biosynthesis seems to be controlled primarily by regulation of HisG enzymatic activity. This chain is ATP phosphoribosyltransferase, found in Bifidobacterium longum (strain DJO10A).